Reading from the N-terminus, the 177-residue chain is LOB domain-containing protein 33 (177 aa).

In terms of domain architecture, LOB spans Ser6–Met108.

Belongs to the LOB domain-containing protein family. Expressed in roots.

In Arabidopsis thaliana (Mouse-ear cress), this protein is LOB domain-containing protein 33 (LBD33).